The primary structure comprises 378 residues: Mitogen-activated protein kinase mpkC (378 aa).

One can recognise a Protein kinase domain in the interval 20–300 (YVNPQPIGMG…AQDALRHPYL (281 aa)). ATP-binding positions include 26–34 (IGMGSFGLV) and lysine 49. Residue aspartate 141 is the Proton acceptor of the active site.

Belongs to the protein kinase superfamily. Ser/Thr protein kinase family. MAP kinase subfamily. Mg(2+) serves as cofactor.

It localises to the nucleus. The enzyme catalyses L-seryl-[protein] + ATP = O-phospho-L-seryl-[protein] + ADP + H(+). It carries out the reaction L-threonyl-[protein] + ATP = O-phospho-L-threonyl-[protein] + ADP + H(+). Activated by threonine and tyrosine phosphorylation. Functionally, mitogen-activated protein kinase (MAPK), part of the high-osmolarity glycerol (HOG) pathway. With sakA, plays a role in the osmotic and oxidative stress responses. Involved in paradoxical growth, the cell wall integrity (CWI) pathway and biofilm formation. SakA and mpkC collaborate during virulence and mpkC could act by modulating sakA activity upon exposure to several types of stresses and during cell wall biosynthesis. This is Mitogen-activated protein kinase mpkC from Aspergillus fumigatus (strain CBS 144.89 / FGSC A1163 / CEA10) (Neosartorya fumigata).